Reading from the N-terminus, the 448-residue chain is Probable glycine dehydrogenase (decarboxylating) subunit 1 (448 aa).

This sequence belongs to the GcvP family. N-terminal subunit subfamily. The glycine cleavage system is composed of four proteins: P, T, L and H. In this organism, the P 'protein' is a heterodimer of two subunits.

The catalysed reaction is N(6)-[(R)-lipoyl]-L-lysyl-[glycine-cleavage complex H protein] + glycine + H(+) = N(6)-[(R)-S(8)-aminomethyldihydrolipoyl]-L-lysyl-[glycine-cleavage complex H protein] + CO2. The glycine cleavage system catalyzes the degradation of glycine. The P protein binds the alpha-amino group of glycine through its pyridoxal phosphate cofactor; CO(2) is released and the remaining methylamine moiety is then transferred to the lipoamide cofactor of the H protein. This Staphylococcus carnosus (strain TM300) protein is Probable glycine dehydrogenase (decarboxylating) subunit 1.